Here is a 246-residue protein sequence, read N- to C-terminus: Hydroxyacylglutathione hydrolase (246 aa).

Zn(2+) contacts are provided by H58, H60, D62, H63, H117, D137, and H175.

Belongs to the metallo-beta-lactamase superfamily. Glyoxalase II family. In terms of assembly, monomer. Zn(2+) serves as cofactor.

It catalyses the reaction an S-(2-hydroxyacyl)glutathione + H2O = a 2-hydroxy carboxylate + glutathione + H(+). Its pathway is secondary metabolite metabolism; methylglyoxal degradation; (R)-lactate from methylglyoxal: step 2/2. Its function is as follows. Thiolesterase that catalyzes the hydrolysis of S-D-lactoyl-glutathione to form glutathione and D-lactic acid. In Prochlorococcus marinus (strain MIT 9301), this protein is Hydroxyacylglutathione hydrolase.